Consider the following 128-residue polypeptide: Cytochrome c-type biogenesis protein CcmE (128 aa).

Topologically, residues 1–8 (MQKRVRNR) are cytoplasmic. The helical; Signal-anchor for type II membrane protein transmembrane segment at 9 to 29 (LITIIICFCSAFLGIGIILYN) threads the bilayer. Residues 30–128 (LENNIVFFLP…KHDENYRPTR (99 aa)) lie on the Periplasmic side of the membrane. 2 residues coordinate heme: His-120 and Tyr-124.

The protein belongs to the CcmE/CycJ family.

Its subcellular location is the cell inner membrane. In terms of biological role, heme chaperone required for the biogenesis of c-type cytochromes. Transiently binds heme delivered by CcmC and transfers the heme to apo-cytochromes in a process facilitated by CcmF and CcmH. This Rickettsia canadensis (strain McKiel) protein is Cytochrome c-type biogenesis protein CcmE.